The sequence spans 160 residues: Crossover junction endodeoxyribonuclease RuvC (160 aa).

Active-site residues include D7, E67, and D138. Mg(2+) contacts are provided by D7, E67, and D138.

It belongs to the RuvC family. Homodimer which binds Holliday junction (HJ) DNA. The HJ becomes 2-fold symmetrical on binding to RuvC with unstacked arms; it has a different conformation from HJ DNA in complex with RuvA. In the full resolvosome a probable DNA-RuvA(4)-RuvB(12)-RuvC(2) complex forms which resolves the HJ. It depends on Mg(2+) as a cofactor.

It localises to the cytoplasm. The enzyme catalyses Endonucleolytic cleavage at a junction such as a reciprocal single-stranded crossover between two homologous DNA duplexes (Holliday junction).. Its function is as follows. The RuvA-RuvB-RuvC complex processes Holliday junction (HJ) DNA during genetic recombination and DNA repair. Endonuclease that resolves HJ intermediates. Cleaves cruciform DNA by making single-stranded nicks across the HJ at symmetrical positions within the homologous arms, yielding a 5'-phosphate and a 3'-hydroxyl group; requires a central core of homology in the junction. The consensus cleavage sequence is 5'-(A/T)TT(C/G)-3'. Cleavage occurs on the 3'-side of the TT dinucleotide at the point of strand exchange. HJ branch migration catalyzed by RuvA-RuvB allows RuvC to scan DNA until it finds its consensus sequence, where it cleaves and resolves the cruciform DNA. The polypeptide is Crossover junction endodeoxyribonuclease RuvC (Brachyspira hyodysenteriae (strain ATCC 49526 / WA1)).